We begin with the raw amino-acid sequence, 287 residues long: Pyridoxal kinase PdxY (287 aa).

Substrate is bound by residues Ser-9 and 44 to 45; that span reads MQ. Residues Asp-111, Ala-142, Glu-147, and Lys-180 each contribute to the ATP site. Asp-221 is a binding site for substrate.

It belongs to the pyridoxine kinase family. PdxY subfamily. As to quaternary structure, homodimer. The cofactor is Mg(2+).

The catalysed reaction is pyridoxal + ATP = pyridoxal 5'-phosphate + ADP + H(+). The protein operates within cofactor metabolism; pyridoxal 5'-phosphate salvage; pyridoxal 5'-phosphate from pyridoxal: step 1/1. Its function is as follows. Pyridoxal kinase involved in the salvage pathway of pyridoxal 5'-phosphate (PLP). Catalyzes the phosphorylation of pyridoxal to PLP. The chain is Pyridoxal kinase PdxY from Burkholderia mallei (strain ATCC 23344).